Here is a 383-residue protein sequence, read N- to C-terminus: 8-amino-7-oxononanoate synthase (383 aa).

Substrate is bound by residues arginine 27 and arginine 34. Position 114 to 115 (114 to 115) interacts with pyridoxal 5'-phosphate; it reads GY. A substrate-binding site is contributed by histidine 139. Pyridoxal 5'-phosphate is bound by residues serine 187, 212-215, and 232-235; these read DDAH and TLSK. Lysine 235 is modified (N6-(pyridoxal phosphate)lysine). Residue threonine 344 coordinates substrate.

The protein belongs to the class-II pyridoxal-phosphate-dependent aminotransferase family. BioF subfamily. As to quaternary structure, homodimer. Requires pyridoxal 5'-phosphate as cofactor.

It carries out the reaction 6-carboxyhexanoyl-[ACP] + L-alanine + H(+) = (8S)-8-amino-7-oxononanoate + holo-[ACP] + CO2. The protein operates within cofactor biosynthesis; biotin biosynthesis. Catalyzes the decarboxylative condensation of pimeloyl-[acyl-carrier protein] and L-alanine to produce 8-amino-7-oxononanoate (AON), [acyl-carrier protein], and carbon dioxide. The protein is 8-amino-7-oxononanoate synthase of Methylorubrum extorquens (strain CM4 / NCIMB 13688) (Methylobacterium extorquens).